A 165-amino-acid chain; its full sequence is Destrin (165 aa).

At Ala2 the chain carries N-acetylalanine. The ADF-H domain maps to 4 to 153 (GVQVADEVCR…NRACIAEKLG (150 aa)). Positions 30-34 (KKRKK) match the Nuclear localization signal motif.

This sequence belongs to the actin-binding proteins ADF family.

Actin-depolymerizing protein. Severs actin filaments (F-actin) and binds to actin monomers (G-actin). Acts in a pH-independent manner. The chain is Destrin (DSTN) from Gallus gallus (Chicken).